Reading from the N-terminus, the 92-residue chain is MARSLKKNPFVANHSLRKIKNLNIKEEKKIIVTWSRASVIVPAMIGHTIAVHNGREHLPIYVTDRMVDHKLGEFAPTLLFQGHARNDKKSRR.

It belongs to the universal ribosomal protein uS19 family.

It localises to the plastid. Its subcellular location is the chloroplast. Functionally, protein S19 forms a complex with S13 that binds strongly to the 16S ribosomal RNA. This chain is Small ribosomal subunit protein uS19c (rps19), found in Pinus thunbergii (Japanese black pine).